The chain runs to 166 residues: UPF0254 protein Mevan_0254 (166 aa).

Belongs to the UPF0254 family.

This Methanococcus vannielii (strain ATCC 35089 / DSM 1224 / JCM 13029 / OCM 148 / SB) protein is UPF0254 protein Mevan_0254.